The primary structure comprises 100 residues: Putative ESAT-6-like protein Y (100 aa).

It belongs to the WXG100 family.

This Mycobacterium leprae (strain TN) protein is Putative ESAT-6-like protein Y.